The primary structure comprises 121 residues: Immunoglobulin heavy variable 6-1 (121 aa).

An N-terminal signal peptide occupies residues 1-20; that stretch reads MSVSFLIFLPVLGLPWGVLS. Positions 21-45 are framework-1; the sequence is QVQLQQSGPGLVKPSQTLSLTCAIS. Positions 21–121 constitute an Ig-like domain; the sequence is QVQLQQSGPG…EDTAVYYCAR (101 aa). Cysteine 42 and cysteine 119 are joined by a disulfide. Residues 46 to 55 are complementarity-determining-1; the sequence is GDSVSSNSAA. A framework-2 region spans residues 56–72; it reads WNWIRQSPSRGLEWLGR. The segment at 73-81 is complementarity-determining-2; sequence TYYRSKWYN. The tract at residues 82–119 is framework-3; that stretch reads DYAVSVKSRITINPDTSKNQFSLQLNSVTPEDTAVYYC. A complementarity-determining-3 region spans residues 120-121; sequence AR.

In terms of assembly, immunoglobulins are composed of two identical heavy chains and two identical light chains; disulfide-linked.

The protein localises to the secreted. It localises to the cell membrane. Its function is as follows. V region of the variable domain of immunoglobulin heavy chains that participates in the antigen recognition. Immunoglobulins, also known as antibodies, are membrane-bound or secreted glycoproteins produced by B lymphocytes. In the recognition phase of humoral immunity, the membrane-bound immunoglobulins serve as receptors which, upon binding of a specific antigen, trigger the clonal expansion and differentiation of B lymphocytes into immunoglobulins-secreting plasma cells. Secreted immunoglobulins mediate the effector phase of humoral immunity, which results in the elimination of bound antigens. The antigen binding site is formed by the variable domain of one heavy chain, together with that of its associated light chain. Thus, each immunoglobulin has two antigen binding sites with remarkable affinity for a particular antigen. The variable domains are assembled by a process called V-(D)-J rearrangement and can then be subjected to somatic hypermutations which, after exposure to antigen and selection, allow affinity maturation for a particular antigen. This chain is Immunoglobulin heavy variable 6-1, found in Homo sapiens (Human).